A 318-amino-acid chain; its full sequence is Deoxyribose-phosphate aldolase (318 aa).

The active-site Proton donor/acceptor is the Asp-155. The active-site Schiff-base intermediate with acetaldehyde is the Lys-218. The Proton donor/acceptor role is filled by Lys-254.

This sequence belongs to the DeoC/FbaB aldolase family. DeoC type 2 subfamily. As to quaternary structure, interacts with YBX1.

The protein resides in the cytoplasm. It localises to the cytoplasmic granule. It is found in the nucleus. It catalyses the reaction 2-deoxy-D-ribose 5-phosphate = D-glyceraldehyde 3-phosphate + acetaldehyde. The protein operates within carbohydrate degradation; 2-deoxy-D-ribose 1-phosphate degradation; D-glyceraldehyde 3-phosphate and acetaldehyde from 2-deoxy-alpha-D-ribose 1-phosphate: step 2/2. Functionally, catalyzes a reversible aldol reaction between acetaldehyde and D-glyceraldehyde 3-phosphate to generate 2-deoxy-D-ribose 5-phosphate. Participates in stress granule (SG) assembly. May allow ATP production from extracellular deoxyinosine in conditions of energy deprivation. The polypeptide is Deoxyribose-phosphate aldolase (Dera) (Mus musculus (Mouse)).